Consider the following 316-residue polypeptide: 4-hydroxy-3-methylbut-2-enyl diphosphate reductase (316 aa).

Cys12 provides a ligand contact to [4Fe-4S] cluster. Residues His41 and His74 each coordinate (2E)-4-hydroxy-3-methylbut-2-enyl diphosphate. Dimethylallyl diphosphate contacts are provided by His41 and His74. Positions 41 and 74 each coordinate isopentenyl diphosphate. [4Fe-4S] cluster is bound at residue Cys96. A (2E)-4-hydroxy-3-methylbut-2-enyl diphosphate-binding site is contributed by His124. Residue His124 coordinates dimethylallyl diphosphate. Isopentenyl diphosphate is bound at residue His124. The active-site Proton donor is Glu126. A (2E)-4-hydroxy-3-methylbut-2-enyl diphosphate-binding site is contributed by Thr168. Cys198 is a binding site for [4Fe-4S] cluster. (2E)-4-hydroxy-3-methylbut-2-enyl diphosphate is bound by residues Ser226, Ser227, Asn228, and Ser270. Dimethylallyl diphosphate-binding residues include Ser226, Ser227, Asn228, and Ser270. Positions 226, 227, 228, and 270 each coordinate isopentenyl diphosphate.

It belongs to the IspH family. The cofactor is [4Fe-4S] cluster.

The enzyme catalyses isopentenyl diphosphate + 2 oxidized [2Fe-2S]-[ferredoxin] + H2O = (2E)-4-hydroxy-3-methylbut-2-enyl diphosphate + 2 reduced [2Fe-2S]-[ferredoxin] + 2 H(+). It catalyses the reaction dimethylallyl diphosphate + 2 oxidized [2Fe-2S]-[ferredoxin] + H2O = (2E)-4-hydroxy-3-methylbut-2-enyl diphosphate + 2 reduced [2Fe-2S]-[ferredoxin] + 2 H(+). It functions in the pathway isoprenoid biosynthesis; dimethylallyl diphosphate biosynthesis; dimethylallyl diphosphate from (2E)-4-hydroxy-3-methylbutenyl diphosphate: step 1/1. The protein operates within isoprenoid biosynthesis; isopentenyl diphosphate biosynthesis via DXP pathway; isopentenyl diphosphate from 1-deoxy-D-xylulose 5-phosphate: step 6/6. In terms of biological role, catalyzes the conversion of 1-hydroxy-2-methyl-2-(E)-butenyl 4-diphosphate (HMBPP) into a mixture of isopentenyl diphosphate (IPP) and dimethylallyl diphosphate (DMAPP). Acts in the terminal step of the DOXP/MEP pathway for isoprenoid precursor biosynthesis. The chain is 4-hydroxy-3-methylbut-2-enyl diphosphate reductase from Acinetobacter baylyi (strain ATCC 33305 / BD413 / ADP1).